A 386-amino-acid chain; its full sequence is S-adenosylmethionine synthase (386 aa).

His-16 provides a ligand contact to ATP. Residue Asp-18 coordinates Mg(2+). Glu-44 contacts K(+). Residues Glu-57 and Gln-100 each contribute to the L-methionine site. Positions 100–110 are flexible loop; that stretch reads QSPDINQGVDR. ATP-binding positions include 164–166, 230–231, Asp-239, 245–246, Ala-262, and Lys-266; these read DGK, KF, and RK. An L-methionine-binding site is contributed by Asp-239. Lys-270 lines the L-methionine pocket.

Belongs to the AdoMet synthase family. Homotetramer; dimer of dimers. Mg(2+) serves as cofactor. K(+) is required as a cofactor.

Its subcellular location is the cytoplasm. The catalysed reaction is L-methionine + ATP + H2O = S-adenosyl-L-methionine + phosphate + diphosphate. It participates in amino-acid biosynthesis; S-adenosyl-L-methionine biosynthesis; S-adenosyl-L-methionine from L-methionine: step 1/1. Functionally, catalyzes the formation of S-adenosylmethionine (AdoMet) from methionine and ATP. The overall synthetic reaction is composed of two sequential steps, AdoMet formation and the subsequent tripolyphosphate hydrolysis which occurs prior to release of AdoMet from the enzyme. The protein is S-adenosylmethionine synthase of Helicobacter hepaticus (strain ATCC 51449 / 3B1).